The chain runs to 316 residues: Annexin D5 (316 aa).

A2 is modified (N-acetylalanine). Annexin repeat units lie at residues 11-82 (PSPR…LWMP), 83-154 (EAVE…AYLN), 166-238 (ASVE…TILQ), and 242-313 (NSCF…SLLG). The Ca(2+) site is built by F24, G26, G28, and E68. Phosphoserine is present on S95. T112 carries the phosphothreonine modification. Ca(2+) is bound at residue G259. Residue Y284 is modified to Phosphotyrosine. Ca(2+)-binding residues include D299 and T300.

Belongs to the annexin (TC 1.A.31.1) family. In terms of tissue distribution, expressed mainly in roots and flowers. Lower in stems and leaves.

This is Annexin D5 (ANN5) from Arabidopsis thaliana (Mouse-ear cress).